A 254-amino-acid chain; its full sequence is Capsid protein (254 aa).

The segment covering 1-12 (MRKYTRNTYTMS) has biased composition (polar residues). The disordered stretch occupies residues 1 to 38 (MRKYTRNTYTMSQKRKVNPQSAWPKKRRTSTTSRKYQW). The short motif at 10 to 35 (TMSQKRKVNPQSAWPKKRRTSTTSRK) is the Bipartite nuclear localization signal element.

Belongs to the geminiviridae capsid protein family. As to quaternary structure, homomultimer. Binds to single-stranded and double-stranded viral DNA. Interacts (via nuclear localization signal) with host importin alpha-1a.

It localises to the virion. It is found in the host nucleus. Its function is as follows. Encapsidates the viral genome into characteristic twinned ('geminate') particles. Binds the genomic viral ssDNA and shuttles it into and out of the cell nucleus. Plays a role in protection of the genome from degradation, virus acquisition and transmission by insect vectors, infectivity, and systemic movement. The CP of monopartite geminiviruses is absolutely essential for virus movement. This chain is Capsid protein, found in Beet curly top virus (strain California/Logan) (BCTV).